The sequence spans 63 residues: Large ribosomal subunit protein bL28 (63 aa).

Belongs to the bacterial ribosomal protein bL28 family.

This chain is Large ribosomal subunit protein bL28, found in Clostridium novyi (strain NT).